A 187-amino-acid polypeptide reads, in one-letter code: Potassium-transporting ATPase KdpC subunit (187 aa).

The chain crosses the membrane as a helical span at residues 10-30 (LVAATMLICVAGYSAAVWAVG).

It belongs to the KdpC family. As to quaternary structure, the system is composed of three essential subunits: KdpA, KdpB and KdpC.

The protein localises to the cell inner membrane. Its function is as follows. Part of the high-affinity ATP-driven potassium transport (or Kdp) system, which catalyzes the hydrolysis of ATP coupled with the electrogenic transport of potassium into the cytoplasm. This subunit acts as a catalytic chaperone that increases the ATP-binding affinity of the ATP-hydrolyzing subunit KdpB by the formation of a transient KdpB/KdpC/ATP ternary complex. This chain is Potassium-transporting ATPase KdpC subunit, found in Parvibaculum lavamentivorans (strain DS-1 / DSM 13023 / NCIMB 13966).